A 209-amino-acid polypeptide reads, in one-letter code: Phosphoheptose isomerase (209 aa).

Residues 50–209 form the SIS domain; that stretch reads IADTFREGGK…ELVEKMMGYD (160 aa). 65-67 is a substrate binding site; sequence NGG. Zn(2+)-binding residues include histidine 74 and glutamate 78. Substrate contacts are provided by residues glutamate 78, 109–110, 135–137, serine 140, and glutamine 188; these read ND and STS. Zn(2+)-binding residues include glutamine 188 and histidine 196.

The protein belongs to the SIS family. GmhA subfamily. The cofactor is Zn(2+).

The protein localises to the cytoplasm. It catalyses the reaction 2 D-sedoheptulose 7-phosphate = D-glycero-alpha-D-manno-heptose 7-phosphate + D-glycero-beta-D-manno-heptose 7-phosphate. It functions in the pathway carbohydrate biosynthesis; D-glycero-D-manno-heptose 7-phosphate biosynthesis; D-glycero-alpha-D-manno-heptose 7-phosphate and D-glycero-beta-D-manno-heptose 7-phosphate from sedoheptulose 7-phosphate: step 1/1. Catalyzes the isomerization of sedoheptulose 7-phosphate in D-glycero-D-manno-heptose 7-phosphate. In Chlorobaculum tepidum (strain ATCC 49652 / DSM 12025 / NBRC 103806 / TLS) (Chlorobium tepidum), this protein is Phosphoheptose isomerase.